Reading from the N-terminus, the 281-residue chain is Undecaprenyl-diphosphatase 1 (281 aa).

Helical transmembrane passes span 95–115 (WMVI…KDLI), 119–139 (FRNL…FILA), 152–172 (LTMK…IPGV), 195–215 (FSFL…LPDA), 227–247 (LQLL…IAWL), and 256–276 (FAWF…LLGT).

The protein belongs to the UppP family.

Its subcellular location is the cell membrane. The enzyme catalyses di-trans,octa-cis-undecaprenyl diphosphate + H2O = di-trans,octa-cis-undecaprenyl phosphate + phosphate + H(+). Functionally, catalyzes the dephosphorylation of undecaprenyl diphosphate (UPP). Confers resistance to bacitracin. This is Undecaprenyl-diphosphatase 1 from Corynebacterium jeikeium (strain K411).